A 304-amino-acid chain; its full sequence is UDP-3-O-acyl-N-acetylglucosamine deacetylase (304 aa).

Zn(2+) contacts are provided by H77, H233, and D237. The active-site Proton donor is H260.

It belongs to the LpxC family. Requires Zn(2+) as cofactor.

The enzyme catalyses a UDP-3-O-[(3R)-3-hydroxyacyl]-N-acetyl-alpha-D-glucosamine + H2O = a UDP-3-O-[(3R)-3-hydroxyacyl]-alpha-D-glucosamine + acetate. Its pathway is glycolipid biosynthesis; lipid IV(A) biosynthesis; lipid IV(A) from (3R)-3-hydroxytetradecanoyl-[acyl-carrier-protein] and UDP-N-acetyl-alpha-D-glucosamine: step 2/6. Its function is as follows. Catalyzes the hydrolysis of UDP-3-O-myristoyl-N-acetylglucosamine to form UDP-3-O-myristoylglucosamine and acetate, the committed step in lipid A biosynthesis. The sequence is that of UDP-3-O-acyl-N-acetylglucosamine deacetylase from Lawsonia intracellularis (strain PHE/MN1-00).